We begin with the raw amino-acid sequence, 115 residues long: Large ribosomal subunit protein bL20 (115 aa).

Belongs to the bacterial ribosomal protein bL20 family.

Binds directly to 23S ribosomal RNA and is necessary for the in vitro assembly process of the 50S ribosomal subunit. It is not involved in the protein synthesizing functions of that subunit. This chain is Large ribosomal subunit protein bL20, found in Prochlorococcus marinus (strain AS9601).